Here is a 739-residue protein sequence, read N- to C-terminus: Catalase-peroxidase (739 aa).

Residues 1–33 (MSVEHPPIGEANTEPAAGGCPVTGRLRHPLQGG) form a disordered region. Positions 106–229 (WHSAGTYRSS…LAAVQMGLIY (124 aa)) form a cross-link, tryptophyl-tyrosyl-methioninium (Trp-Tyr) (with M-255). Histidine 107 functions as the Proton acceptor in the catalytic mechanism. The disordered stretch occupies residues 113–134 (RSSDGRGGANTGQQRFAPLNSW). Positions 229-255 (YVNPEGPNGNPDPLAAAVDIKDTFGRM) form a cross-link, tryptophyl-tyrosyl-methioninium (Tyr-Met) (with W-106). Residue histidine 270 participates in heme b binding.

The protein belongs to the peroxidase family. Peroxidase/catalase subfamily. As to quaternary structure, homodimer or homotetramer. Heme b serves as cofactor. Formation of the three residue Trp-Tyr-Met cross-link is important for the catalase, but not the peroxidase activity of the enzyme.

The catalysed reaction is H2O2 + AH2 = A + 2 H2O. It catalyses the reaction 2 H2O2 = O2 + 2 H2O. Its function is as follows. Bifunctional enzyme with both catalase and broad-spectrum peroxidase activity. The sequence is that of Catalase-peroxidase from Nocardia farcinica (strain IFM 10152).